The following is a 494-amino-acid chain: Ubiquinol-cytochrome-c reductase complex core protein I, mitochondrial (494 aa).

Histidine 70 contributes to the Zn(2+) binding site. The Proton acceptor role is filled by glutamate 73. 2 residues coordinate Zn(2+): histidine 74 and glutamate 150.

Belongs to the peptidase M16 family. UQCRC1/QCR1 subfamily. As to quaternary structure, component of the ubiquinol-cytochrome c oxidoreductase (cytochrome b-c1 complex, complex III, CIII), a multisubunit enzyme composed of 10 subunits. The complex is composed of 3 respiratory subunits cytochrome b, cytochrome c1 and Rieske protein, 2 core protein subunits, and additional low-molecular weight protein subunits. The complex exists as an obligatory dimer and forms supercomplexes (SCs) in the inner mitochondrial membrane with cytochrome c oxidase (complex IV, CIV). Zn(2+) serves as cofactor. In terms of processing, the N-terminus is blocked.

It is found in the mitochondrion inner membrane. Its function is as follows. Component of the ubiquinol-cytochrome c oxidoreductase, a multisubunit transmembrane complex that is part of the mitochondrial electron transport chain which drives oxidative phosphorylation. The respiratory chain contains 3 multisubunit complexes succinate dehydrogenase (complex II, CII), ubiquinol-cytochrome c oxidoreductase (cytochrome b-c1 complex, complex III, CIII) and cytochrome c oxidase (complex IV, CIV), that cooperate to transfer electrons derived from NADH and succinate to molecular oxygen, creating an electrochemical gradient over the inner membrane that drives transmembrane transport and the ATP synthase. The cytochrome b-c1 complex catalyzes electron transfer from ubiquinol to cytochrome c, linking this redox reaction to translocation of protons across the mitochondrial inner membrane, with protons being carried across the membrane as hydrogens on the quinol. In the process called Q cycle, 2 protons are consumed from the matrix, 4 protons are released into the intermembrane space and 2 electrons are passed to cytochrome c. This Euglena gracilis protein is Ubiquinol-cytochrome-c reductase complex core protein I, mitochondrial.